Here is a 230-residue protein sequence, read N- to C-terminus: Phosphoribosylformylglycinamidine synthase subunit PurQ (230 aa).

One can recognise a Glutamine amidotransferase type-1 domain in the interval Lys2 to Ile230. The Nucleophile role is filled by Cys85. Residues His202 and Glu204 contribute to the active site.

Part of the FGAM synthase complex composed of 1 PurL, 1 PurQ and 2 PurS subunits.

Its subcellular location is the cytoplasm. It catalyses the reaction N(2)-formyl-N(1)-(5-phospho-beta-D-ribosyl)glycinamide + L-glutamine + ATP + H2O = 2-formamido-N(1)-(5-O-phospho-beta-D-ribosyl)acetamidine + L-glutamate + ADP + phosphate + H(+). The catalysed reaction is L-glutamine + H2O = L-glutamate + NH4(+). It functions in the pathway purine metabolism; IMP biosynthesis via de novo pathway; 5-amino-1-(5-phospho-D-ribosyl)imidazole from N(2)-formyl-N(1)-(5-phospho-D-ribosyl)glycinamide: step 1/2. Its function is as follows. Part of the phosphoribosylformylglycinamidine synthase complex involved in the purines biosynthetic pathway. Catalyzes the ATP-dependent conversion of formylglycinamide ribonucleotide (FGAR) and glutamine to yield formylglycinamidine ribonucleotide (FGAM) and glutamate. The FGAM synthase complex is composed of three subunits. PurQ produces an ammonia molecule by converting glutamine to glutamate. PurL transfers the ammonia molecule to FGAR to form FGAM in an ATP-dependent manner. PurS interacts with PurQ and PurL and is thought to assist in the transfer of the ammonia molecule from PurQ to PurL. The chain is Phosphoribosylformylglycinamidine synthase subunit PurQ from Methanocaldococcus jannaschii (strain ATCC 43067 / DSM 2661 / JAL-1 / JCM 10045 / NBRC 100440) (Methanococcus jannaschii).